The following is a 73-amino-acid chain: Putative membrane protein insertion efficiency factor (73 aa).

This sequence belongs to the UPF0161 family.

The protein localises to the cell inner membrane. Could be involved in insertion of integral membrane proteins into the membrane. In Dinoroseobacter shibae (strain DSM 16493 / NCIMB 14021 / DFL 12), this protein is Putative membrane protein insertion efficiency factor.